We begin with the raw amino-acid sequence, 184 residues long: Photosystem I assembly protein Ycf4 (184 aa).

2 helical membrane-spanning segments follow: residues 22–42 (LCWA…GTSS) and 57–77 (ILFF…LFIS).

This sequence belongs to the Ycf4 family.

The protein resides in the plastid. It localises to the chloroplast thylakoid membrane. Seems to be required for the assembly of the photosystem I complex. The protein is Photosystem I assembly protein Ycf4 of Daucus carota (Wild carrot).